Here is a 489-residue protein sequence, read N- to C-terminus: Cytochrome P450-DIT2 (489 aa).

Cysteine 435 provides a ligand contact to heme.

The protein belongs to the cytochrome P450 family. It depends on heme as a cofactor.

Involved in spore wall maturation. Thought to catalyze the oxidation of tyrosine residues in the formation of LL-dityrosine a precursor of the spore wall. This chain is Cytochrome P450-DIT2 (DIT2), found in Saccharomyces cerevisiae (strain ATCC 204508 / S288c) (Baker's yeast).